A 490-amino-acid chain; its full sequence is ATP synthase subunit beta, plastid (490 aa).

170–177 lines the ATP pocket; that stretch reads GGAGVGKT.

It belongs to the ATPase alpha/beta chains family. As to quaternary structure, F-type ATPases have 2 components, CF(1) - the catalytic core - and CF(0) - the membrane proton channel. CF(1) has five subunits: alpha(3), beta(3), gamma(1), delta(1), epsilon(1). CF(0) has four main subunits: a(1), b(1), b'(1) and c(9-12).

Its subcellular location is the plastid thylakoid membrane. The enzyme catalyses ATP + H2O + 4 H(+)(in) = ADP + phosphate + 5 H(+)(out). Produces ATP from ADP in the presence of a proton gradient across the membrane. The catalytic sites are hosted primarily by the beta subunits. In Cuscuta reflexa (Southern Asian dodder), this protein is ATP synthase subunit beta, plastid.